Consider the following 498-residue polypeptide: Lysine--tRNA ligase (498 aa).

Mg(2+) is bound by residues Glu-411 and Glu-418.

It belongs to the class-II aminoacyl-tRNA synthetase family. In terms of assembly, homodimer. The cofactor is Mg(2+).

It localises to the cytoplasm. It carries out the reaction tRNA(Lys) + L-lysine + ATP = L-lysyl-tRNA(Lys) + AMP + diphosphate. The protein is Lysine--tRNA ligase of Enterococcus faecalis (strain ATCC 700802 / V583).